Consider the following 176-residue polypeptide: Translation initiation factor IF-3 (176 aa).

It belongs to the IF-3 family. In terms of assembly, monomer.

The protein localises to the cytoplasm. IF-3 binds to the 30S ribosomal subunit and shifts the equilibrium between 70S ribosomes and their 50S and 30S subunits in favor of the free subunits, thus enhancing the availability of 30S subunits on which protein synthesis initiation begins. The polypeptide is Translation initiation factor IF-3 (Wolinella succinogenes (strain ATCC 29543 / DSM 1740 / CCUG 13145 / JCM 31913 / LMG 7466 / NCTC 11488 / FDC 602W) (Vibrio succinogenes)).